A 186-amino-acid polypeptide reads, in one-letter code: MKTAHEIRPGNVIMLDGSPWVVQKTETTRSGRNAAIVKMKLKNVLLDSSTETTFKGEDKMDDIILERLDCTYSYFADPMYVFMDAEYNQYDVEAGNLGDASAYIVDGMEEVCQVTFYEGKAISVELPTTIVREVTYTEPSARGDTSGKVMKPATVSGGATLSVADFVKTGDMIEIDTRTGEFKKRV.

It belongs to the elongation factor P family.

It localises to the cytoplasm. The protein operates within protein biosynthesis; polypeptide chain elongation. Its function is as follows. Involved in peptide bond synthesis. Stimulates efficient translation and peptide-bond synthesis on native or reconstituted 70S ribosomes in vitro. Probably functions indirectly by altering the affinity of the ribosome for aminoacyl-tRNA, thus increasing their reactivity as acceptors for peptidyl transferase. The chain is Elongation factor P from Shewanella woodyi (strain ATCC 51908 / MS32).